Consider the following 582-residue polypeptide: Poly(A) RNA polymerase, mitochondrial (582 aa).

Residues 1–37 (MAVPGVGLLTRLNLCARRRTRVQRPIVRLLSCPGTVA) constitute a mitochondrion transit peptide. K90 is modified (N6-acetyllysine). Residues 107–109 (YES) and 241–242 (GC) each bind ATP. The Mg(2+) site is built by D243 and D245. One can recognise a PAP-associated domain in the interval 437-483 (LELLLKEFFEYFGNFAFDKNSINIRQGREQNKPDSSPLYIQNPFETS).

The protein belongs to the DNA polymerase type-B-like family. As to quaternary structure, homodimer. The cofactor is Mg(2+). It depends on Mn(2+) as a cofactor. In terms of tissue distribution, ubiquitous, with stronger expression in tissues with high energy requirements: heart, brain, and skeletal muscle.

It localises to the cytoplasm. It is found in the mitochondrion. The enzyme catalyses RNA(n) + ATP = RNA(n)-3'-adenine ribonucleotide + diphosphate. Its function is as follows. Polymerase that creates the 3' poly(A) tail of mitochondrial transcripts. Can use all four nucleotides, but has higher activity with ATP and UTP (in vitro). Plays a role in replication-dependent histone mRNA degradation. May be involved in the terminal uridylation of mature histone mRNAs before their degradation is initiated. Might be responsible for the creation of some UAA stop codons which are not encoded in mtDNA. This is Poly(A) RNA polymerase, mitochondrial (MTPAP) from Homo sapiens (Human).